The sequence spans 403 residues: Homoserine O-succinyltransferase (403 aa).

Residues 58 to 366 (NAVLICHALS…ESNHGHDAFL (309 aa)) form the AB hydrolase-1 domain. The Nucleophile role is filled by Ser164. Arg234 serves as a coordination point for substrate. Active-site residues include Asp329 and His362. A substrate-binding site is contributed by Asp363.

It belongs to the AB hydrolase superfamily. MetX family. Homodimer.

The protein localises to the cytoplasm. It catalyses the reaction L-homoserine + succinyl-CoA = O-succinyl-L-homoserine + CoA. It participates in amino-acid biosynthesis; L-methionine biosynthesis via de novo pathway; O-succinyl-L-homoserine from L-homoserine: step 1/1. Functionally, transfers a succinyl group from succinyl-CoA to L-homoserine, forming succinyl-L-homoserine. In Halothiobacillus neapolitanus (strain ATCC 23641 / c2) (Thiobacillus neapolitanus), this protein is Homoserine O-succinyltransferase.